A 685-amino-acid chain; its full sequence is Twinkle mtDNA helicase (685 aa).

A mitochondrion-targeting transit peptide spans Met-1–Leu-31. The tract at residues Met-1–Ser-122 is contributes to single strand DNA binding activity. The tract at residues Pro-54 to Ser-214 is N-terminal region (NTR). The segment at Ser-122–Gln-373 is required for hexamers formation and DNA helicase activity. The segment at Ser-215–Arg-335 is primase-like domain. The 252-residue stretch at Val-385–Lys-636 folds into the SF4 helicase domain. Residues His-406–Gln-591 form a maybe required for stable oligomeric structure region. Position 416–423 (Gly-416–Thr-423) interacts with ATP. Positions Arg-454–Leu-482 form a coiled coil. A might negatively regulate ATPase activity region spans residues Lys-641–Gly-685. Residues Ile-642–Gly-685 are disordered.

Homohexamer (via C-terminus), which assembles in a ring-like structure. Homoheptamer, which assembles in a ring-like structure. Homooctamer, which assembles in a ring-like structure. Oligomers may sequentially eject two monomers (octamer&gt;heptamer&gt;hexamer) upon DNA binding. Oligomerization is Mg(2+), nucleotide and DNA-independent, however, Mg(2+) and nucleotide stabilize the homohexameric form. Interacts with POLG in vitro. Interacts with LONP1. In terms of tissue distribution, ubiquitous with the highest levels in the liver, heart and kidneys. The skeletal muscle, brain and testis showed lower but detectable expression. Expression is coregulated with MRPL43.

It is found in the mitochondrion matrix. Its subcellular location is the mitochondrion nucleoid. It localises to the mitochondrion inner membrane. The catalysed reaction is ATP + H2O = ADP + phosphate + H(+). The enzyme catalyses Couples ATP hydrolysis with the unwinding of duplex DNA at the replication fork by translocating in the 5'-3' direction. This creates two antiparallel DNA single strands (ssDNA). The leading ssDNA polymer is the template for DNA polymerase III holoenzyme which synthesizes a continuous strand.. Its function is as follows. Mitochondrial helicase involved in mtDNA replication and repair. Might have a role in mtDNA repair. Has DNA strand separation activity needed to form a processive replication fork for leading strand synthesis which is catalyzed by the formation of a replisome complex with POLG and mtSDB. Preferentially unwinds DNA substrates with pre-existing 5'-and 3'- single-stranded tails but is also active on a 5'- flap substrate. Can dissociate the invading strand of immobile or mobile D-loop DNA structures irrespective of the single strand polarity of the third strand. In addition to its DNA strand separation activity, also has DNA strand annealing, DNA strand-exchange and DNA branch migration activities. The polypeptide is Twinkle mtDNA helicase (Mus musculus (Mouse)).